The chain runs to 362 residues: Methylthioribose-1-phosphate isomerase (362 aa).

Residue D252 is the Proton donor of the active site.

This sequence belongs to the eIF-2B alpha/beta/delta subunits family. MtnA subfamily.

The protein localises to the cytoplasm. The protein resides in the nucleus. It carries out the reaction 5-(methylsulfanyl)-alpha-D-ribose 1-phosphate = 5-(methylsulfanyl)-D-ribulose 1-phosphate. Its pathway is amino-acid biosynthesis; L-methionine biosynthesis via salvage pathway; L-methionine from S-methyl-5-thio-alpha-D-ribose 1-phosphate: step 1/6. Its function is as follows. Catalyzes the interconversion of methylthioribose-1-phosphate (MTR-1-P) into methylthioribulose-1-phosphate (MTRu-1-P). The sequence is that of Methylthioribose-1-phosphate isomerase from Drosophila mojavensis (Fruit fly).